We begin with the raw amino-acid sequence, 301 residues long: MSEDEEKVKLRRLEPAIQKFTKIVIPTDLERLRKHQINIEKYQRCRIWDKLHEEHINAGRTVQQLRSNIREMEKLCLKVHKDDLVLLKRMIDPVKEAAATATAEFLQLHLESVEELKKQVNDEELLQPSLTRSTTVDGVLHTGEAEAASQSLTQIYALPEIPQDQNAAESWETLEADLIELSHLVTDMSLLVSSQQEKIDSIADHVNSAAVNVEEGTKNLQKAAKYKLAALPVAGALIGGVVGGPIGLLAGFKVAGIAAALGGGVLGFTGGKLIQRRKQKMMEKLTSSCPDLPSQSDKKRS.

Serine 2 is modified (N-acetylserine). Residues 2 to 227 (SEDEEKVKLR…KNLQKAAKYK (226 aa)) lie on the Cytoplasmic side of the membrane. Lysine 41 is subject to N6-acetyllysine. Residues 49 to 128 (DKLHEEHINA…QVNDEELLQP (80 aa)) are a coiled coil. At tyrosine 156 the chain carries Phosphotyrosine; by ABL1. The 63-residue stretch at 161–223 (IPQDQNAAES…EEGTKNLQKA (63 aa)) folds into the t-SNARE coiled-coil homology domain. Residues 228–248 (LAALPVAGALIGGVVGGPIGL) traverse the membrane as a helical segment. Residues 228-274 (LAALPVAGALIGGVVGGPIGLLAGFKVAGIAAALGGGVLGFTGGKLI) form a necessary and sufficient for localization to autophagosome region. At 249 to 253 (LAGFK) the chain is on the lumenal side. A helical transmembrane segment spans residues 254–274 (VAGIAAALGGGVLGFTGGKLI). Residues 275–301 (QRRKQKMMEKLTSSCPDLPSQSDKKRS) lie on the Cytoplasmic side of the membrane. Serine 288 bears the Phosphoserine mark. Residues 298–301 (KKRS) carry the Endoplasmic reticulum retention signal motif.

This sequence belongs to the syntaxin family. In terms of assembly, forms a SNARE complex composed of VAMP8, SNAP29 and STX17 involved in fusion of autophagosome with lysosome. May interact with VTI1B. Probably interacts with BET1, SCFD1 and SEC22B. Interacts with PTPN2 and ABL1; involved in STX17 phosphorylation. Interacts with COPB1. Interacts with TMED9 and TMED10; the interaction is direct. Interacts with VAMP7. Interacts with RUBCNL/PACER; promoting targeting of RUBCNL/PACER to autophagosome. Interacts with VAMP8, SNAP29, VPS39 and VPS41; these interactions are increased in the absence of TMEM39A. Interacts with IRGM; promoting STX17 recruitment to autophagosomes. Interacts with ATG8 proteins GABARAP and MAP1LC3B. Interacts with RNF115; this interaction enhances STX17 stability which in turn promotes autophagosome maturation. Interacts with RAB39A (GTP-bound); the interaction promotes autophagosome-lysosome membrane fusion driven by STX17-SNAP29-VAMP8. Interacts with RAB39B; the interaction may promote a different fonction in autophagy as compared with RAB39A. Post-translationally, dephosphorylation by PTPN2; regulates exit from the endoplasmic reticulum. Phosphorylated at Tyr-156 probably by ABL1.

Its subcellular location is the endoplasmic reticulum membrane. It localises to the smooth endoplasmic reticulum membrane. The protein resides in the endoplasmic reticulum-Golgi intermediate compartment membrane. It is found in the cytoplasmic vesicle. The protein localises to the autophagosome membrane. Its subcellular location is the COPII-coated vesicle membrane. It localises to the cytoplasm. The protein resides in the cytosol. It is found in the mitochondrion membrane. The protein localises to the autolysosome membrane. Its function is as follows. SNAREs, soluble N-ethylmaleimide-sensitive factor-attachment protein receptors, are essential proteins for fusion of cellular membranes. SNAREs localized on opposing membranes assemble to form a trans-SNARE complex, an extended, parallel four alpha-helical bundle that drives membrane fusion. STX17 is a SNARE of the autophagosome involved in autophagy through the direct control of autophagosome membrane fusion with the lysosome membrane. May also play a role in the early secretory pathway where it may maintain the architecture of the endoplasmic reticulum-Golgi intermediate compartment/ERGIC and Golgi and/or regulate transport between the endoplasmic reticulum, the ERGIC and the Golgi. This chain is Syntaxin-17, found in Mus musculus (Mouse).